Here is an 806-residue protein sequence, read N- to C-terminus: Leucine--tRNA ligase (806 aa).

A 'HIGH' region motif is present at residues 54–64; sequence SYPSGDLHMGH. Positions 571-575 match the 'KMSKS' region motif; it reads KMSKS. K574 provides a ligand contact to ATP.

It belongs to the class-I aminoacyl-tRNA synthetase family.

The protein resides in the cytoplasm. The enzyme catalyses tRNA(Leu) + L-leucine + ATP = L-leucyl-tRNA(Leu) + AMP + diphosphate. This Tropheryma whipplei (strain Twist) (Whipple's bacillus) protein is Leucine--tRNA ligase.